The following is a 392-amino-acid chain: Copper-containing nitrite reductase (392 aa).

An N-terminal signal peptide occupies residues 1–18 (MKRQALAAMIASLFALAA). The N-palmitoyl cysteine moiety is linked to residue Cys19. Cys19 is lipidated: S-diacylglycerol cysteine. Residues 30–49 (ETPAASAEAASSAAQATAET) form a disordered region. Plastocyanin-like domains lie at 101–195 (WTFD…ILVE) and 245–346 (GHVG…LKVE). Cu cation contacts are provided by His134, His139, His174, Cys175, His183, and Met188. A substrate-binding site is contributed by His139. His280 is a substrate binding site. His329 is a binding site for Cu cation. The disordered stretch occupies residues 367–392 (GAASAPAASAPAASAPAASASEKSVY). 4 consecutive repeat copies span residues 368 to 372 (AASAP), 373 to 377 (AASAP), 378 to 382 (AASAP), and 383 to 387 (AASAS). Residues 368 to 387 (AASAPAASAPAASAPAASAS) are 4 X 5 AA tandem repeats of A-A-S-A-P.

The protein belongs to the multicopper oxidase family. As to quaternary structure, homotrimer. It depends on Cu(+) as a cofactor. Requires Cu(2+) as cofactor. Post-translationally, palmitoylated.

Its subcellular location is the cell outer membrane. It carries out the reaction nitric oxide + Fe(III)-[cytochrome c] + H2O = Fe(II)-[cytochrome c] + nitrite + 2 H(+). In terms of biological role, catalyzes the reduction of nitrite to nitric oxide (NO), probably with azurin as electron donor. Essential for growth and survival in oxygen-depleted environments. Can also provide protection against killing by normal human sera. The protein is Copper-containing nitrite reductase (aniA) of Neisseria gonorrhoeae.